A 194-amino-acid chain; its full sequence is Imidazoleglycerol-phosphate dehydratase (194 aa).

The protein belongs to the imidazoleglycerol-phosphate dehydratase family.

The protein resides in the cytoplasm. The catalysed reaction is D-erythro-1-(imidazol-4-yl)glycerol 3-phosphate = 3-(imidazol-4-yl)-2-oxopropyl phosphate + H2O. Its pathway is amino-acid biosynthesis; L-histidine biosynthesis; L-histidine from 5-phospho-alpha-D-ribose 1-diphosphate: step 6/9. This chain is Imidazoleglycerol-phosphate dehydratase, found in Streptococcus gordonii (strain Challis / ATCC 35105 / BCRC 15272 / CH1 / DL1 / V288).